A 262-amino-acid polypeptide reads, in one-letter code: Glutamate racemase (262 aa).

Residues 7–8 (DS) and 39–40 (YG) contribute to the substrate site. Catalysis depends on Cys70, which acts as the Proton donor/acceptor. 71–72 (NT) contacts substrate. Residue Cys182 is the Proton donor/acceptor of the active site. 183–184 (TH) provides a ligand contact to substrate.

Belongs to the aspartate/glutamate racemases family.

The catalysed reaction is L-glutamate = D-glutamate. It participates in cell wall biogenesis; peptidoglycan biosynthesis. In terms of biological role, provides the (R)-glutamate required for cell wall biosynthesis. This Campylobacter concisus (strain 13826) protein is Glutamate racemase.